An 870-amino-acid chain; its full sequence is Dynamin-2 (870 aa).

Residues 28-294 (HLDLPQIAVV…LTNHIRESLP (267 aa)) enclose the Dynamin-type G domain. Residues 38–45 (GGQSAGKS) are G1 motif. The GDP site is built by Ser-41, Gly-43, Lys-44, Ser-45, Ser-46, Arg-59, and Gly-60. Residues 64–66 (VTR) are G2 motif. The G3 motif stretch occupies residues 136-139 (DLPG). The segment at 205 to 208 (TKLD) is G4 motif. Residues Lys-206, Asp-208, and Asp-211 each contribute to the GDP site. Position 231 is a phosphotyrosine (Tyr-231). Positions 235 to 238 (VNRS) are G5 motif. Asn-236, Arg-237, and Gln-239 together coordinate GDP. Residue Lys-299 is modified to N6-acetyllysine. Positions 519-625 (LVIRRGWLTI…WKASFLRAGV (107 aa)) constitute a PH domain. At Tyr-597 the chain carries Phosphotyrosine. Lys-598 is subject to N6-acetyllysine. In terms of domain architecture, GED spans 653–744 (VETIRNLVDS…IIGDISTSTV (92 aa)). Residues 741–870 (TSTVSTPVPP…IRPAEPSLLD (130 aa)) are disordered. Residue Thr-755 is modified to Phosphothreonine. A compositionally biased stretch (polar residues) spans 756–767 (WLQNTSSHSPTP). Phosphoserine; by CDK1 is present on Ser-764. Positions 826–846 (SAPPQIPSRPARIPPGIPPGV) are enriched in pro residues. Low complexity predominate over residues 847–864 (PSRRAPAAPSRPTIIRPA).

The protein belongs to the TRAFAC class dynamin-like GTPase superfamily. Dynamin/Fzo/YdjA family. As to quaternary structure, oligomerizes into a helical polymer that self-assembles around the vesicle membrane, when associated to the menbrane through lipid binding. Interacts with SHANK1 and SHANK2. Interacts with SNX9. Interacts (via C-terminal proline-rich domain (PRD)) with SNX18 (via SH3 domain); this interaction regulates ATG9A and ATG16L1 trafficking from recycling endosomes to sites of autophagosome formation. Interacts with SNX33 (via SH3 domain). Interacts with PSTPIP1 (via SH3 domain). Interacts with CTNND2. Interacts (via C-terminal proline-rich domain (PRD)) with BIN1 (via SH3 domain); this interaction allows the recruitment of DNM2 to the membrane tubules and inhibits self-assembly-stimulated GTPase activity on the membrane. Interacts with GABARAP, GABARAPL1 and GABARAPL2. Interacts with MAP1LC3B (the lipidate and non-lipidated LC3 form); this interaction mediates recycling endosome scission leading to autophagosome release. Interacts with ITSN1. Interacts with MYOF. May interact with PIK3C3. May be a component of a complex composed of RAB5A (in GDP-bound form), DYN2 and PIK3C3. Interacts with SDC4; this interaction is markedly enhanced at focal ahesion site upon induction of focal adhesions and stress-fiber formation. Interacts with ACTN1. Interacts with CTTN; this interaction stimulates the intrinsic GTPase activity of DNM2 and stabilizes the association of DNM2 and actin filaments; in addition this interaction is stimulated by ligand binding to the receptor, leading to the recruitment of the DNM2-CTTN complex to the sequestered receptor-ligand complex to its internalization. Interacts with NOSTRIN (via SH3 domain); this interaction allows the recruitment of NOS3 to dynamin-positive structures. Interacts (via C-terminal proline-rich domain (PRD)) with SH3BP4 (via SH3 domain); this interaction controls the GTPase activity and is prevented by EGFR-induced tyrosine phosphorylation of either DNM2 or SH3BP4. Interacts with MYO1E (via SH3 domain). Interacts with TUBG1; this interaction may participate in centrosome cohesion. Phosphorylation at Ser-848 by GSK3-alpha relieves the inhibition of BIN1 and promotes endocytosis. Phosphorylation at Ser-764 by CDK1 is greatly increased upon mitotic entry. It regulates cytokinesis downstream of calcineurin, and does not affect clathrin-mediated endocytosis. Dephosphorylated by calcineurin/PP2 during cytokinesis in a Ca(2+)- and calmodulin-dependent manner. Phosphorylated on tyrosine residues by EGFR. Phosphorylated on tyrosine residues after activation of SRC. Ubiquitously expressed. Brain expression is restricted to glial cells and fibroblasts. Highest levels in the testis.

The protein resides in the cytoplasm. The protein localises to the cytoskeleton. Its subcellular location is the cytoplasmic vesicle. It is found in the clathrin-coated vesicle. It localises to the cell projection. The protein resides in the uropodium. The protein localises to the endosome. Its subcellular location is the microtubule organizing center. It is found in the centrosome. It localises to the centriole. The protein resides in the recycling endosome. The protein localises to the phagocytic cup. Its subcellular location is the phagosome membrane. It is found in the podosome. It localises to the cell junction. The protein resides in the postsynaptic density. The protein localises to the synapse. Its subcellular location is the synaptosome. It is found in the midbody. It localises to the membrane. The protein resides in the clathrin-coated pit. The protein localises to the cell membrane. The catalysed reaction is GTP + H2O = GDP + phosphate + H(+). Functionally, catalyzes the hydrolysis of GTP and utilizes this energy to mediate vesicle scission at plasma membrane during endocytosis and filament remodeling at many actin structures during organization of the actin cytoskeleton. Plays an important role in vesicular trafficking processes, namely clathrin-mediated endocytosis (CME), exocytic and clathrin-coated vesicle from the trans-Golgi network, and PDGF stimulated macropinocytosis. During vesicular trafficking process, associates to the membrane, through lipid binding, and self-assembles into ring-like structure through oligomerization to form a helical polymer around the vesicle membrane and leading to vesicle scission. Plays a role in organization of the actin cytoskeleton by mediating arrangement of stress fibers and actin bundles in podocytes. During organization of the actin cytoskeleton, self-assembles into ring-like structure that directly bundles actin filaments to form typical membrane tubules decorated with dynamin spiral polymers. Self-assembly increases GTPase activity and the GTP hydrolysis causes the rapid depolymerization of dynamin spiral polymers, and results in dispersion of actin bundles. Remodels, through its interaction with CTTN, bundled actin filaments in a GTPase-dependent manner and plays a role in orchestrating the global actomyosin cytoskeleton. The interaction with CTTN stabilizes the interaction of DNM2 and actin filaments and stimulates the intrinsic GTPase activity that results in actin filament-barbed ends and increases the sensitivity of filaments in bundles to the actin depolymerizing factor, CFL1. Plays a role in the autophagy process, by participating in the formation of ATG9A vesicles destined for the autophagosomes through its interaction with SNX18, by mediating recycling endosome scission leading to autophagosome release through MAP1LC3B interaction and by regulating maturation of apoptotic cell corpse-containing phagosomes by recruiting PIK3C3 to the phagosome membrane. Also plays a role in cytokinesis. May participate in centrosome cohesion through its interaction with TUBG1. Plays a role in the regulation of neuron morphology, axon growth and formation of neuronal growth cones. Involved in membrane tubulation. This Rattus norvegicus (Rat) protein is Dynamin-2.